The chain runs to 899 residues: MRGGAGMCFASMEAAGSRGMGKGASRRRTARSTAPVGALVERVVVAPAPVEQQRGAGRPEAHPQSVAARAVVTVRRRRKEDAKDRFAEQLDALADRVGRSVLLELVSTETDPRKGTPKKSKPSALVGWFDKKDVKAERVVYTAEFAVDAGFGEPGAVTVLNRHQREFYIESIVVEGFPTGPAHFTCNSWVQPTRVSRDRRVFFSNRPYLPSETPPGLRELRLRELADLRGDGTGERRITDRVYDYDVYNDLGNPDKGVASARPVLGGEQMPYPRRMRTGRPSTATDASAESRVEYPEPIYVSRDEEFEEGKNEMLSEGAIKALLHNFMPLLVSSVSPDIRDFAGFHDVDNLFKEGLRLKQALHDQLFQKIPFVRKIQENSEGLLRYDTPDIIKKDKFAWLRDDEFARQALAGINPVNIERLQAFPPVSKLDPAVYGPPESAITEEHIIGHLDGMSVQEAVEGSRLYMLDYHDIFLPFLDRINAQDGRKAYGTRAVFFLTAAGTLKPIAIELCLPPMTDGCKRAKRVFTPPADATSNWLWQLAKAHVCSNDAGVHQLINHWLRTHACMEPFIIAAHRQMSAMHPIFKLLKPHMRYTLKINALARQILINGDGVIESGFTPGNVCMEMSAFAYRELWRLDQEGLPADLIRRGMAVEDPSQPHGLRLLIEDYPYAADGLLLWSAISRWCEAYVAAYYPSDEAVQADYELQSWYAEAVQSGHADKRGAPWWPRLSTPGDLASLLTTLVWLCSAQHAALNFGQYPLGGYIPNRPPLMRRLVPAEGDPEYAHLVADPHRFFLSALPSLTQTTTFMTVIDTLSTHSADEEYLGERPDEAWTADPAALAAAREFAADVRRAEEEIERRNADPSRRNRCGAGVLPYELMAPSSGPGITCRGVPNSVTI.

3 disordered regions span residues 15 to 34 (AGSR…RSTA), 48 to 68 (APVE…SVAA), and 258 to 291 (VASA…SAES). The PLAT domain occupies 68 to 204 (ARAVVTVRRR…VSRDRRVFFS (137 aa)). In terms of domain architecture, Lipoxygenase spans 207–899 (PYLPSETPPG…CRGVPNSVTI (693 aa)). Positions 559, 564, 751, 755, and 899 each coordinate Fe cation.

It belongs to the lipoxygenase family. Fe cation is required as a cofactor.

The catalysed reaction is (9Z,12Z)-octadecadienoate + O2 = (13S)-hydroperoxy-(9Z,11E)-octadecadienoate. It carries out the reaction (9Z,12Z,15Z)-octadecatrienoate + O2 = (13S)-hydroperoxy-(9Z,11E,15Z)-octadecatrienoate. It participates in lipid metabolism; oxylipin biosynthesis. Functionally, plant lipoxygenase may be involved in a number of diverse aspects of plant physiology including growth and development, pest resistance, and senescence or responses to wounding. Catalyzes the hydroperoxidation of lipids containing a cis,cis-1,4-pentadiene structure. The polypeptide is Putative lipoxygenase 5 (Oryza sativa subsp. japonica (Rice)).